A 224-amino-acid chain; its full sequence is Flagellar L-ring protein (224 aa).

An N-terminal signal peptide occupies residues 1–15 (MKWYLVALSGLLLSG). Residue Cys-16 is the site of N-palmitoyl cysteine attachment. A lipid anchor (S-diacylglycerol cysteine) is attached at Cys-16.

It belongs to the FlgH family. As to quaternary structure, the basal body constitutes a major portion of the flagellar organelle and consists of four rings (L,P,S, and M) mounted on a central rod.

It is found in the cell outer membrane. Its subcellular location is the bacterial flagellum basal body. Its function is as follows. Assembles around the rod to form the L-ring and probably protects the motor/basal body from shearing forces during rotation. The chain is Flagellar L-ring protein from Trichlorobacter lovleyi (strain ATCC BAA-1151 / DSM 17278 / SZ) (Geobacter lovleyi).